We begin with the raw amino-acid sequence, 103 residues long: Large ribosomal subunit protein bL21 (103 aa).

The protein belongs to the bacterial ribosomal protein bL21 family. Part of the 50S ribosomal subunit. Contacts protein L20.

Its function is as follows. This protein binds to 23S rRNA in the presence of protein L20. In Paraburkholderia phytofirmans (strain DSM 17436 / LMG 22146 / PsJN) (Burkholderia phytofirmans), this protein is Large ribosomal subunit protein bL21.